Consider the following 285-residue polypeptide: Pantothenate synthetase (285 aa).

Residue 30-37 (MGYLHAGH) participates in ATP binding. His-37 acts as the Proton donor in catalysis. Gln-61 is a binding site for (R)-pantoate. Position 61 (Gln-61) interacts with beta-alanine. Residue 147-150 (GQKD) participates in ATP binding. Gln-153 is a binding site for (R)-pantoate. ATP is bound by residues Val-176 and 184–187 (LSSR).

Belongs to the pantothenate synthetase family. Homodimer.

Its subcellular location is the cytoplasm. The catalysed reaction is (R)-pantoate + beta-alanine + ATP = (R)-pantothenate + AMP + diphosphate + H(+). It functions in the pathway cofactor biosynthesis; (R)-pantothenate biosynthesis; (R)-pantothenate from (R)-pantoate and beta-alanine: step 1/1. Catalyzes the condensation of pantoate with beta-alanine in an ATP-dependent reaction via a pantoyl-adenylate intermediate. This is Pantothenate synthetase from Solidesulfovibrio magneticus (strain ATCC 700980 / DSM 13731 / RS-1) (Desulfovibrio magneticus).